Reading from the N-terminus, the 176-residue chain is Transcriptional repressor NrdR (176 aa).

Residues 3 to 34 fold into a zinc finger; it reads CPFCQHTDSRVLESRSAEAGQSVRRRRECLQC. Residues 49–139 enclose the ATP-cone domain; the sequence is ITVIKRNQDR…VYRQFRGIRD (91 aa). The segment at 151 to 176 is disordered; the sequence is GDGPLPSVLDEPYEDTAQPTIMISPQ. Over residues 167 to 176 the composition is skewed to polar residues; it reads AQPTIMISPQ.

The protein belongs to the NrdR family. The cofactor is Zn(2+).

Negatively regulates transcription of bacterial ribonucleotide reductase nrd genes and operons by binding to NrdR-boxes. This chain is Transcriptional repressor NrdR, found in Acaryochloris marina (strain MBIC 11017).